Here is a 217-residue protein sequence, read N- to C-terminus: Lipid A acyltransferase PagP (217 aa).

Residues 1 to 24 (MYLKRILITLSLITLPIVPCLSYA) form the signal peptide. Residues H89, D132, and S133 contribute to the active site.

This sequence belongs to the lipid A palmitoyltransferase family. Homodimer.

Its subcellular location is the cell outer membrane. It carries out the reaction a lipid A + a 1,2-diacyl-sn-glycero-3-phosphocholine = a hepta-acyl lipid A + a 2-acyl-sn-glycero-3-phosphocholine. It catalyses the reaction a lipid IVA + a 1,2-diacyl-sn-glycero-3-phosphocholine = a lipid IVB + a 2-acyl-sn-glycero-3-phosphocholine. The catalysed reaction is a lipid IIA + a 1,2-diacyl-sn-glycero-3-phosphocholine = a lipid IIB + a 2-acyl-sn-glycero-3-phosphocholine. Functionally, transfers a fatty acid residue from the sn-1 position of a phospholipid to the N-linked hydroxyfatty acid chain on the proximal unit of lipid A or its precursors. In Pectobacterium atrosepticum (strain SCRI 1043 / ATCC BAA-672) (Erwinia carotovora subsp. atroseptica), this protein is Lipid A acyltransferase PagP.